We begin with the raw amino-acid sequence, 1362 residues long: MTQSFTGRKRVRKVFGHIPQIAEMPNLIEVQKYSYDQFLQVDEPTGGREEQGLQAVFKSVFPISDFSESSTLEFVNYEFETPKYDVEECQQRGMTFAAPLKVTLRLIVFEVDEDTGAKSVKDIKEQDVYMGDMPLMTENGTFVINGTERVIVSQMHRSPGVFFDHDKGKTHSSGKLLFAARVIPYRGSWLDFEFDAKDIVFVRIDRRRKLPVTTLLYALGLDSEEILSTFYNSVTFTKVKQGWRVPFNADRYRGAKPERDLIDAKTGKVVVEAGRKVTPRLAKKLAEEGLKELLVQDEDIHTRYLAQEIVNMETGEIFAEAGDEITPELLEALVEAGHTDIITLDIDHVNTGAFIRNTLAVDKCTNREQALIDIYRVMRPGEPPTADTAEALFKSLFFDAERYDLSAVGRVKMNMRLDLDVSDTVRVLRKEDILAVIKTLVGLRDGKGEIDDIDNLGNRRVRSVGELMENQYRVGLLRMERAIKERMSSVDIDTVMPHDLINAKPAAAAVREFFGSSQLSQFMDQTNPLSEITHKRRLSALGPGGLTRERAGFEVRDVHPTHYGRICPIETPEGPNIGLINSLATFARVNKYGFIESPYRRVKGGKLADDIVYLSAMEESRYRIAQANVAIGKKGEIEGELVNCRIDGDFEMVPPDQVDFVDVSPKQIVSVAAALIPFLENDDANRALMGSNMQRQAVPLIRSEAPLVGTGMEEVVARDSGAAIGARRTGVVDQVDATRIVIRATEEVDSSKSGVDIYNLRKFQRSNQNTCINQRPLVRVGDQVKKGDIIADGPSTELGDLALGRNVLVAFMPWNGYNFEDSILISERIVRDDVFTSIHIEEFEVMARDTKLGPEEITRDIPNVGEEALKNLDEAGIVYIGAEVNPGDILCGKITPKGESPMTPEEKLLRAIFGEKASDVRDTSLRLPPGVQGTVVEVRVFNRHGIDKDERAMAIEREEIERLAKDRDDEFGILDRNVYGRLSEILLGKQIASGPKGMEADAKVTQANLDDLSHGQWWQIALKNEKAQSEIEALKKQYDESKERLEARFADKVDKLQRGDELPPGVMKMVKVFVAVKRKLQTGDKMAGRHGNKGVISRIVPMEDMPYLDDGQPVDIVLNPLGVPSRMNVGQILETHLGWACAGLGKKIEVALDAYHRENKPKELKDLVKQIYGDDPTVASLDEEQLVEMAGNLTNGVPIATPVFDGAREPEIVEMLELAGLDRSGQVTLHDGRTGEPFDRKVTVGYIYMLKLHHLVDDKIHARSIGPYSLVTQQPLGGKAQFGGQRFGEMEVWALEAYGAAYTLQEMLTVKSDDVAGRTKVYEAIVRGDDTFEAGIPESFNVLVKEMRSLGLNVELLTPAAN.

This sequence belongs to the RNA polymerase beta chain family. As to quaternary structure, the RNAP catalytic core consists of 2 alpha, 1 beta, 1 beta' and 1 omega subunit. When a sigma factor is associated with the core the holoenzyme is formed, which can initiate transcription.

It catalyses the reaction RNA(n) + a ribonucleoside 5'-triphosphate = RNA(n+1) + diphosphate. Functionally, DNA-dependent RNA polymerase catalyzes the transcription of DNA into RNA using the four ribonucleoside triphosphates as substrates. The chain is DNA-directed RNA polymerase subunit beta from Parvibaculum lavamentivorans (strain DS-1 / DSM 13023 / NCIMB 13966).